A 701-amino-acid polypeptide reads, in one-letter code: Ribosomal RNA large subunit methyltransferase K/L (701 aa).

One can recognise a THUMP domain in the interval 43–154; it reads LLYQSLMWSR…KETAHISLDL (112 aa).

It belongs to the methyltransferase superfamily. RlmKL family.

It localises to the cytoplasm. The enzyme catalyses guanosine(2445) in 23S rRNA + S-adenosyl-L-methionine = N(2)-methylguanosine(2445) in 23S rRNA + S-adenosyl-L-homocysteine + H(+). It carries out the reaction guanosine(2069) in 23S rRNA + S-adenosyl-L-methionine = N(2)-methylguanosine(2069) in 23S rRNA + S-adenosyl-L-homocysteine + H(+). Functionally, specifically methylates the guanine in position 2445 (m2G2445) and the guanine in position 2069 (m7G2069) of 23S rRNA. In Klebsiella pneumoniae subsp. pneumoniae (strain ATCC 700721 / MGH 78578), this protein is Ribosomal RNA large subunit methyltransferase K/L.